A 312-amino-acid chain; its full sequence is Methionyl-tRNA formyltransferase (312 aa).

109 to 112 (SLLP) lines the (6S)-5,6,7,8-tetrahydrofolate pocket.

Belongs to the Fmt family.

It catalyses the reaction L-methionyl-tRNA(fMet) + (6R)-10-formyltetrahydrofolate = N-formyl-L-methionyl-tRNA(fMet) + (6S)-5,6,7,8-tetrahydrofolate + H(+). Attaches a formyl group to the free amino group of methionyl-tRNA(fMet). The formyl group appears to play a dual role in the initiator identity of N-formylmethionyl-tRNA by promoting its recognition by IF2 and preventing the misappropriation of this tRNA by the elongation apparatus. In Ruminiclostridium cellulolyticum (strain ATCC 35319 / DSM 5812 / JCM 6584 / H10) (Clostridium cellulolyticum), this protein is Methionyl-tRNA formyltransferase.